Here is a 3473-residue protein sequence, read N- to C-terminus: AP2/ERF domain-containing protein PFD0985w (3473 aa).

Disordered regions lie at residues 35-61 (NNII…NNNN), 366-450 (KMER…HLVC), 647-704 (NNNN…INAK), 750-801 (NIIK…RKKK), 1096-1196 (VDNN…MNMN), 1300-1328 (DNTS…NSRG), 1388-1418 (HLRS…GAER), 1773-1807 (NNTG…NNKV), and 1864-1898 (IGED…NNLS). 3 stretches are compositionally biased toward low complexity: residues 44–61 (NGHN…NNNN), 396–442 (NNND…NSNN), and 647–666 (NNNN…NNNN). A compositionally biased stretch (basic and acidic residues) spans 683–694 (TGDKHETSKKED). Low complexity predominate over residues 751–768 (IIKSDNVNNNNNNNNNNN). Positions 785–801 (NKKHKKKNIHDNNRKKK) are enriched in basic residues. Low complexity predominate over residues 1098 to 1156 (NNNNNNNNNNNNNVNNISNNGTNLEENANNANNANNPNNANNPNNANNSNNADYVNDYN). The segment covering 1160 to 1171 (KEEDDDDEEEDN) has biased composition (acidic residues). Positions 1182 to 1196 (TNYNININGENMNMN) are enriched in low complexity. 2 stretches are compositionally biased toward polar residues: residues 1314-1326 (VGSN…NNNS) and 1390-1412 (RSSN…SSMR). Residues 1773–1805 (NNTGTTQNNNKYGTNSNNNNNNNNNNNNNNNNN) show a composition bias toward low complexity. A compositionally biased stretch (basic residues) spans 1881–1893 (LKRRKNGNSKRAK). The segment at residues 1957–2011 (PLPTGVYFDSARKLWRCQWKENGKFKTKGFSLIHYSTLEEARKQCILYRCDVGNI) is a DNA-binding region (AP2/ERF 1). Disordered regions lie at residues 2068-2088 (EKTG…NVNN), 2319-2343 (QVDV…SNSK), 2387-2470 (TNDN…NIRS), 2520-2584 (LGNG…NYNN), 2609-2677 (LYGK…PASN), 2840-2860 (MNNN…NNVK), 2881-2902 (NDKL…SSSP), and 2937-2960 (KYVE…KKDE). Residues 2333–2342 (KRSKRSKSNS) show a composition bias toward basic residues. Low complexity-rich tracts occupy residues 2388–2400 (NDNN…NNND) and 2409–2460 (DNNN…NNND). Acidic residues predominate over residues 2525 to 2542 (DGEEEGGGDYDEKEDDLL). Composition is skewed to low complexity over residues 2557 to 2584 (NNNN…NYNN) and 2615 to 2624 (NNNNNNNNNN). Residues 2663 to 2675 (LLNSQVNESSAPA) show a composition bias toward polar residues. Over residues 2841-2858 (NNNNNNNNNNNNNNNNNN) the composition is skewed to low complexity. Over residues 2943 to 2953 (NGDKETNDYNT) the composition is skewed to basic and acidic residues. The AP2/ERF 2 DNA-binding region spans 3268 to 3321 (SLPKGIYYDHAKKLYRVQYIINNSIKTKGFSVKKLGLAQAKIEAESFRNFCLEN). Over residues 3369 to 3391 (KMSINNDGNNNDGNNNDGNNNDD) the composition is skewed to low complexity. The interval 3369 to 3473 (KMSINNDGNN…NNDNEMSQNE (105 aa)) is disordered. The span at 3392 to 3403 (NNNDDNNNDDNN) shows a compositional bias: acidic residues. A compositionally biased stretch (low complexity) spans 3404–3457 (NDGNNNDDNNNEGINNDDNNNEGINNDDNNNEGINNNDDNNNNDDNNNEGINND).

Its subcellular location is the nucleus. The sequence is that of AP2/ERF domain-containing protein PFD0985w from Plasmodium falciparum (isolate 3D7).